Here is a 174-residue protein sequence, read N- to C-terminus: Putative FAS1 domain-containing protein 096L (174 aa).

Positions 36–171 (PDTLWSKLNE…GIIHLMEEVY (136 aa)) constitute an FAS1 domain.

In Acheta domesticus (House cricket), this protein is Putative FAS1 domain-containing protein 096L.